We begin with the raw amino-acid sequence, 1183 residues long: DNA-directed RNA polymerase subunit beta (1183 aa).

Residues 1149–1162 (DNEIEMADVDDEDA) are compositionally biased toward acidic residues. Residues 1149-1183 (DNEIEMADVDDEDATERKVDLQQKDVPETQKETTD) form a disordered region. The segment covering 1163–1183 (TERKVDLQQKDVPETQKETTD) has biased composition (basic and acidic residues).

The protein belongs to the RNA polymerase beta chain family. As to quaternary structure, the RNAP catalytic core consists of 2 alpha, 1 beta, 1 beta' and 1 omega subunit. When a sigma factor is associated with the core the holoenzyme is formed, which can initiate transcription.

The enzyme catalyses RNA(n) + a ribonucleoside 5'-triphosphate = RNA(n+1) + diphosphate. DNA-dependent RNA polymerase catalyzes the transcription of DNA into RNA using the four ribonucleoside triphosphates as substrates. The chain is DNA-directed RNA polymerase subunit beta from Staphylococcus haemolyticus (strain JCSC1435).